Here is a 215-residue protein sequence, read N- to C-terminus: Dual specificity phosphatase 29 (215 aa).

The Tyrosine-protein phosphatase domain occupies 53 to 201 (HVNEVWPRLH…LRELDKQLVK (149 aa)). A substrate-binding site is contributed by 145-152 (HCAMGRSR). Catalysis depends on Cys-146, which acts as the Phosphocysteine intermediate.

The protein belongs to the protein-tyrosine phosphatase family. Non-receptor class dual specificity subfamily. As to quaternary structure, homodimer. Interacts with PRKAA2.

It localises to the cytoplasm. The protein resides in the nucleus. It carries out the reaction O-phospho-L-tyrosyl-[protein] + H2O = L-tyrosyl-[protein] + phosphate. It catalyses the reaction O-phospho-L-seryl-[protein] + H2O = L-seryl-[protein] + phosphate. The catalysed reaction is O-phospho-L-threonyl-[protein] + H2O = L-threonyl-[protein] + phosphate. Its function is as follows. Dual specificity phosphatase able to dephosphorylate phosphotyrosine, phosphoserine and phosphothreonine residues within the same substrate, with a preference for phosphotyrosine as a substrate. Involved in the modulation of intracellular signaling cascades. In skeletal muscle regulates systemic glucose homeostasis by activating, AMPK, an energy sensor protein kinase. Affects MAP kinase signaling though modulation of the MAPK1/2 cascade in skeletal muscle promoting muscle cell differentiation, development and atrophy. In Rattus norvegicus (Rat), this protein is Dual specificity phosphatase 29 (Dusp29).